The chain runs to 1373 residues: Insulin-like growth factor 1 receptor (1373 aa).

The signal sequence occupies residues 1–30; sequence MKSGSGGGSPTSLWGLVFLSAALSLWPTSG. Cysteines 33 and 52 form a disulfide. N-linked (GlcNAc...) asparagine glycans are attached at residues Asn51, Asn102, and Asn135. 13 disulfides stabilise this stretch: Cys150–Cys178, Cys182–Cys205, Cys192–Cys211, Cys215–Cys224, Cys219–Cys230, Cys231–Cys239, Cys235–Cys248, Cys251–Cys260, Cys264–Cys276, Cys282–Cys303, Cys307–Cys321, Cys324–Cys328, and Cys332–Cys354. Asn245 carries N-linked (GlcNAc...) asparagine glycosylation. An N-linked (GlcNAc...) asparagine glycan is attached at Asn314. Residues Asn418 and Asn439 are each glycosylated (N-linked (GlcNAc...) asparagine). Cys456 and Cys489 are disulfide-bonded. 4 consecutive Fibronectin type-III domains span residues 490 to 610, 611 to 709, 735 to 829, and 835 to 928; these read ESDV…TNAS, VPSI…TEAE, RPER…TMPA, and IPGP…VPAK. Asn535, Asn608, Asn623, Asn641, Asn748, Asn757, Asn765, Asn901, and Asn914 each carry an N-linked (GlcNAc...) asparagine glycan. Over 742-936 the chain is Extracellular; that stretch reads DVMQVANTTM…AKTTYENFMH (195 aa). Residues 937–960 form a helical membrane-spanning segment; sequence LIIALPVAILLIVGGLVIMLYVFH. The Cytoplasmic segment spans residues 961–1373; the sequence is RKRNNSRLGN…ALPLPQSSTC (413 aa). The IRS1- and SHC1-binding motif lies at 978–981; sequence NPEY. Tyr981 bears the Phosphotyrosine mark. The Protein kinase domain maps to 1000-1276; the sequence is ITMNRELGQG…SIKDEMEPSF (277 aa). ATP-binding positions include 1006-1014 and Lys1034; that span reads LGQGSFGMV. Catalysis depends on Asp1137, which acts as the Proton acceptor. Phosphotyrosine; by autocatalysis is present on residues Tyr1163, Tyr1167, and Tyr1168. Residues Lys1170 and Lys1173 each participate in a glycyl lysine isopeptide (Lys-Gly) (interchain with G-Cter in ubiquitin) cross-link. Ser1280 is modified (phosphoserine; by GSK3-beta). Residues 1283–1373 form a disordered region; the sequence is YSEENKPPEP…ALPLPQSSTC (91 aa). Phosphoserine is present on Ser1284. Positions 1292 to 1305 are enriched in acidic residues; that stretch reads PEELEMELEMEPEN. A compositionally biased stretch (low complexity) spans 1306–1322; that stretch reads MESVPLDPSASSASLPL. A compositionally biased stretch (basic and acidic residues) spans 1323 to 1332; that stretch reads PERHSGHKAE.

It belongs to the protein kinase superfamily. Tyr protein kinase family. Insulin receptor subfamily. In terms of assembly, tetramer of 2 alpha and 2 beta chains linked by disulfide bonds. The alpha chains contribute to the formation of the ligand-binding domain, while the beta chain carries the kinase domain. Interacts with PIK3R1 and with the PTB/PID domains of IRS1 and SHC1 in vitro when autophosphorylated on tyrosine residues. Forms a hybrid receptor with INSR, the hybrid is a tetramer consisting of 1 alpha chain and 1 beta chain of INSR and 1 alpha chain and 1 beta chain of IGF1R. Interacts with ARRB1 and ARRB2. Interacts with GRB10. Interacts with RACK1. Interacts with SOCS1, SOCS2 and SOCS3. Interacts with 14-3-3 proteins. Interacts with NMD2. Interacts with MAP3K5. Interacts with STAT3. Found in a ternary complex with IGF1 and ITGAV:ITGB3 or ITGA6:ITGB4. Interacts (nascent precursor form) with ZFAND2B. Post-translationally, autophosphorylated on tyrosine residues in response to ligand binding. Autophosphorylation occurs in trans, i.e. one subunit of the dimeric receptor phosphorylates tyrosine residues on the other subunit. Autophosphorylation occurs in a sequential manner; Tyr-1167 is predominantly phosphorylated first, followed by phosphorylation of Tyr-1163 and Tyr-1168. While every single phosphorylation increases kinase activity, all three tyrosine residues in the kinase activation loop (Tyr-1163, Tyr-1167 and Tyr-1168) have to be phosphorylated for optimal activity. Can be autophosphorylated at additional tyrosine residues (in vitro). Autophosphorylated is followed by phosphorylation of juxtamembrane tyrosines and C-terminal serines. May also be phosphorylated at Tyr-1163 and Tyr-1168 by mTORC2. Phosphorylation of Tyr-981 is required for IRS1- and SHC1-binding. Phosphorylation of Ser-1280 by GSK-3beta restrains kinase activity and promotes cell surface expression, it requires a priming phosphorylation at Ser-1284. Dephosphorylated by PTPN1. Polyubiquitinated at Lys-1170 and Lys-1173 through both 'Lys-48' and 'Lys-29' linkages, promoting receptor endocytosis and subsequent degradation by the proteasome. Ubiquitination is facilitated by pre-existing phosphorylation. In terms of processing, sumoylated with SUMO1. Post-translationally, controlled by regulated intramembrane proteolysis (RIP). Undergoes metalloprotease-dependent constitutive ectodomain shedding to produce a membrane-anchored 52 kDa C-Terminal fragment which is further processed by presenilin gamma-secretase to yield an intracellular 50 kDa fragment.

Its subcellular location is the cell membrane. The enzyme catalyses L-tyrosyl-[protein] + ATP = O-phospho-L-tyrosyl-[protein] + ADP + H(+). Its activity is regulated as follows. Activated by autophosphorylation at Tyr-1163, Tyr-1167 and Tyr-1168 on the kinase activation loop; phosphorylation at all three tyrosine residues is required for optimal kinase activity. Inhibited by MSC1609119A-1, BMS-754807, PQIP, benzimidazole pyridinone, isoquinolinedione, bis-azaindole, 3-cyanoquinoline, 2,4-bis-arylamino-1,3-pyrimidine, pyrrolopyrimidine, pyrrole-5-carboxaldehyde, picropodophyllin (PPP), tyrphostin derivatives. While most inhibitors bind to the ATP binding pocket, MSC1609119A-1 functions as allosteric inhibitor and binds close to the DFG motif and the activation loop. Receptor tyrosine kinase which mediates actions of insulin-like growth factor 1 (IGF1). Binds IGF1 with high affinity and IGF2 and insulin (INS) with a lower affinity. The activated IGF1R is involved in cell growth and survival control. IGF1R is crucial for tumor transformation and survival of malignant cell. Ligand binding activates the receptor kinase, leading to receptor autophosphorylation, and tyrosines phosphorylation of multiple substrates, that function as signaling adapter proteins including, the insulin-receptor substrates (IRS1/2), Shc and 14-3-3 proteins. Phosphorylation of IRSs proteins lead to the activation of two main signaling pathways: the PI3K-AKT/PKB pathway and the Ras-MAPK pathway. The result of activating the MAPK pathway is increased cellular proliferation, whereas activating the PI3K pathway inhibits apoptosis and stimulates protein synthesis. Phosphorylated IRS1 can activate the 85 kDa regulatory subunit of PI3K (PIK3R1), leading to activation of several downstream substrates, including protein AKT/PKB. AKT phosphorylation, in turn, enhances protein synthesis through mTOR activation and triggers the antiapoptotic effects of IGFIR through phosphorylation and inactivation of BAD. In parallel to PI3K-driven signaling, recruitment of Grb2/SOS by phosphorylated IRS1 or Shc leads to recruitment of Ras and activation of the ras-MAPK pathway. In addition to these two main signaling pathways IGF1R signals also through the Janus kinase/signal transducer and activator of transcription pathway (JAK/STAT). Phosphorylation of JAK proteins can lead to phosphorylation/activation of signal transducers and activators of transcription (STAT) proteins. In particular activation of STAT3, may be essential for the transforming activity of IGF1R. The JAK/STAT pathway activates gene transcription and may be responsible for the transforming activity. JNK kinases can also be activated by the IGF1R. IGF1 exerts inhibiting activities on JNK activation via phosphorylation and inhibition of MAP3K5/ASK1, which is able to directly associate with the IGF1R. When present in a hybrid receptor with INSR, binds IGF1. The sequence is that of Insulin-like growth factor 1 receptor (Igf1r) from Mus musculus (Mouse).